A 471-amino-acid chain; its full sequence is Tryptophanase (471 aa).

N6-acetyllysine is present on residues lysine 5, lysine 115, and lysine 156. An N6-(pyridoxal phosphate)lysine modification is found at lysine 270. Lysine 450 is modified (N6-acetyllysine).

Belongs to the beta-eliminating lyase family. As to quaternary structure, homotetramer. The cofactor is pyridoxal 5'-phosphate.

It catalyses the reaction L-tryptophan + H2O = indole + pyruvate + NH4(+). It participates in amino-acid degradation; L-tryptophan degradation via pyruvate pathway; indole and pyruvate from L-tryptophan: step 1/1. The chain is Tryptophanase from Escherichia fergusonii (strain ATCC 35469 / DSM 13698 / CCUG 18766 / IAM 14443 / JCM 21226 / LMG 7866 / NBRC 102419 / NCTC 12128 / CDC 0568-73).